A 340-amino-acid polypeptide reads, in one-letter code: Nod factor export ATP-binding protein I (340 aa).

Basic and acidic residues predominate over residues 1–24; it reads MLKRKLGPEDLRRLETPAIERESH. Positions 1-34 are disordered; the sequence is MLKRKLGPEDLRRLETPAIERESHGQTSAKSSVP. Positions 25–34 are enriched in polar residues; sequence GQTSAKSSVP. The ABC transporter domain occupies 42-272; the sequence is VDFAGVTKSY…HIGCQVMEIY (231 aa). 74–81 lines the ATP pocket; that stretch reads GPNGAGKS.

Belongs to the ABC transporter superfamily. Lipooligosaccharide exporter (TC 3.A.1.102) family. In terms of assembly, the complex is composed of two ATP-binding proteins (NodI) and two transmembrane proteins (NodJ).

The protein localises to the cell inner membrane. Its function is as follows. Part of the ABC transporter complex NodIJ involved in the export of the nodulation factors (Nod factors), the bacterial signal molecules that induce symbiosis and subsequent nodulation induction. Nod factors are LCO (lipo-chitin oligosaccharide), a modified beta-1,4-linked N-acetylglucosamine oligosaccharide. This subunit is responsible for energy coupling to the transport system. The chain is Nod factor export ATP-binding protein I from Mesorhizobium japonicum (strain LMG 29417 / CECT 9101 / MAFF 303099) (Mesorhizobium loti (strain MAFF 303099)).